A 258-amino-acid chain; its full sequence is Large ribosomal subunit protein uL15c (258 aa).

Residues 1 to 65 (MSAASLIPVS…NVKSSGENVR (65 aa)) constitute a chloroplast transit peptide. Residues 67–90 (RLDNLGPQPGSRKRPKRKGRGIAA) form a disordered region. Residues 77–86 (SRKRPKRKGR) are compositionally biased toward basic residues.

Belongs to the universal ribosomal protein uL15 family. Part of the 50S ribosomal subunit.

The protein resides in the plastid. Its subcellular location is the chloroplast. The protein is Large ribosomal subunit protein uL15c (RPL15) of Pisum sativum (Garden pea).